Consider the following 73-residue polypeptide: Defensin-like protein 87 (73 aa).

The first 27 residues, 1 to 27 (MTTKKTSSVVLPLLLVFALILMPMVAG), serve as a signal peptide directing secretion. 3 disulfides stabilise this stretch: Cys-33–Cys-71, Cys-45–Cys-69, and Cys-49–Cys-70.

It belongs to the DEFL family.

The protein localises to the secreted. This chain is Defensin-like protein 87, found in Arabidopsis thaliana (Mouse-ear cress).